We begin with the raw amino-acid sequence, 138 residues long: MKELARFSVTLPNELFDEINKRVKNTEYPSRSEFIRDLVREKIIADKWKDDSQSDAIAVLSIVYSHHQNNLVSQMLELEHHADVKIACSTHIHIDKENCLEMISLQGSGKNIEKFSQKIGSLKGVKFSNLARIGITKA.

His-80, His-91, His-93, and Cys-99 together coordinate Ni(2+).

The protein belongs to the transcriptional regulatory CopG/NikR family. Ni(2+) is required as a cofactor.

In terms of biological role, transcriptional regulator. This Campylobacter hominis (strain ATCC BAA-381 / DSM 21671 / CCUG 45161 / LMG 19568 / NCTC 13146 / CH001A) protein is Putative nickel-responsive regulator.